Reading from the N-terminus, the 804-residue chain is Zinc finger protein 541 (804 aa).

2 disordered regions span residues 21-120 (SKAS…NPDI) and 133-197 (TLDL…GNPR). The C2H2-type 1 zinc-finger motif lies at 285 to 307 (FICKNCSQMFYTEKGLSSHMCFH). Residues 379–426 (MEQEKDGEERDSKESSQQRKRKKRPPPKRLFIPPPPSTAGEPGPAGCH) are disordered. Over residues 380–395 (EQEKDGEERDSKESSQ) the composition is skewed to basic and acidic residues. A compositionally biased stretch (basic residues) spans 396–405 (QRKRKKRPPP). The 93-residue stretch at 509-601 (PHINIGSRFQ…VALETLLLRG (93 aa)) folds into the ELM2 domain. The SANT domain maps to 616 to 667 (TGSDVWTPIEKRLFKKAFYAHKKDFYLIHKTIQTKTVAQCVEYYYIWKKMIK). Residues 680–743 (VKREPEEVER…TPEPSGSVES (64 aa)) are disordered. Positions 690-721 (TEEKVPCSPRERPSHHPIPELKIKTKSYRRES) are enriched in basic and acidic residues. The C2H2-type 2 zinc-finger motif lies at 747-769 (FPCRECERVFDKIKSRNAHMKRH).

As to quaternary structure, interacts with DNTTIP1. Identified in a complex with KCDT19, HDAC1 and HSPA2s. Component of a histone deacetylase complex containing DNTTIP1, ZNF541, HDAC1 and HDAC2. Identified in a complex with HDAC1, HDAC2, DNTTIP1 and KCTD19.

The protein resides in the nucleus. In terms of biological role, transcription regulator which is essential for male fertility and for the completion of meiotic prophase in spermatocytes. Regulates progression of the pachytene stage of meiotic prophase by activating the expression of genes involved in meiosis and post-meiosis during spermatogenesis. Maintains the repression of pre-pachytene transcriptional programs, including meiotic double-strand breaks (DSB) formation genes in pachytene spermatocytes and suppresses aberrant DSB formation after mid-pachytene, thus ensuring meiosis progression. This Macaca fascicularis (Crab-eating macaque) protein is Zinc finger protein 541 (ZNF541).